The sequence spans 33 residues: Dermaseptin-4 (33 aa).

Leu-33 carries the leucine amide modification.

In terms of tissue distribution, expressed by the skin glands.

Its subcellular location is the secreted. Functionally, has antiparasitic activity against trypomastigote form of T.cruzi (IC(50)=0.25 uM) in vitro but not against L.infantum. Probably acts by permeabilizing cell membranes. In vitro, shows no cytotoxicity against macrophages. Has antibacterial activity. This chain is Dermaseptin-4, found in Pithecopus nordestinus (Northeastern Brazilian leaf frog).